A 150-amino-acid chain; its full sequence is Large ribosomal subunit protein bL9 (150 aa).

It belongs to the bacterial ribosomal protein bL9 family.

Functionally, binds to the 23S rRNA. This chain is Large ribosomal subunit protein bL9, found in Cupriavidus metallidurans (strain ATCC 43123 / DSM 2839 / NBRC 102507 / CH34) (Ralstonia metallidurans).